A 384-amino-acid polypeptide reads, in one-letter code: 1-deoxy-D-xylulose 5-phosphate reductoisomerase (384 aa).

NADPH is bound by residues threonine 10, glycine 11, serine 12, isoleucine 13, glycine 36, asparagine 38, and asparagine 122. Lysine 123 contacts 1-deoxy-D-xylulose 5-phosphate. Glutamate 124 serves as a coordination point for NADPH. Aspartate 148 is a binding site for Mn(2+). The 1-deoxy-D-xylulose 5-phosphate site is built by serine 149, glutamate 150, serine 174, and histidine 197. A Mn(2+)-binding site is contributed by glutamate 150. Residue glycine 203 coordinates NADPH. The 1-deoxy-D-xylulose 5-phosphate site is built by serine 210, asparagine 215, lysine 216, and glutamate 219. Glutamate 219 is a Mn(2+) binding site.

The protein belongs to the DXR family. Mg(2+) is required as a cofactor. The cofactor is Mn(2+).

It catalyses the reaction 2-C-methyl-D-erythritol 4-phosphate + NADP(+) = 1-deoxy-D-xylulose 5-phosphate + NADPH + H(+). It functions in the pathway isoprenoid biosynthesis; isopentenyl diphosphate biosynthesis via DXP pathway; isopentenyl diphosphate from 1-deoxy-D-xylulose 5-phosphate: step 1/6. Functionally, catalyzes the NADPH-dependent rearrangement and reduction of 1-deoxy-D-xylulose-5-phosphate (DXP) to 2-C-methyl-D-erythritol 4-phosphate (MEP). The polypeptide is 1-deoxy-D-xylulose 5-phosphate reductoisomerase (Geotalea daltonii (strain DSM 22248 / JCM 15807 / FRC-32) (Geobacter daltonii)).